An 883-amino-acid polypeptide reads, in one-letter code: Phosphoenolpyruvate carboxylase (883 aa).

Catalysis depends on residues H138 and K546.

It belongs to the PEPCase type 1 family. Requires Mg(2+) as cofactor.

The catalysed reaction is oxaloacetate + phosphate = phosphoenolpyruvate + hydrogencarbonate. Its function is as follows. Forms oxaloacetate, a four-carbon dicarboxylic acid source for the tricarboxylic acid cycle. The protein is Phosphoenolpyruvate carboxylase of Escherichia coli O81 (strain ED1a).